The primary structure comprises 1235 residues: ATP-dependent DNA helicase mph1 (1235 aa).

Disordered stretches follow at residues 20–78 (LTQA…YRIH) and 96–148 (DEMP…VHSP). Over residues 61-72 (SRSDNDEADEKK) the composition is skewed to basic and acidic residues. Residues 137–148 (AKTQKQNIVHSP) are compositionally biased toward polar residues. One can recognise a Helicase ATP-binding domain in the interval 272-440 (IVHKGLFNNL…EVIDNLEIAE (169 aa)). 285 to 292 (LPTGLGKT) is a binding site for ATP. The short motif at 388-391 (DEAH) is the DEAH box element. The Helicase C-terminal domain occupies 608–784 (KLTYLCDTVL…GSRFTFRHDL (177 aa)). 3 disordered regions span residues 808–827 (NTQD…RKKL), 944–1117 (SRLQ…PPLM), and 1144–1235 (TGAK…DSDE). The segment covering 947–958 (QRPEDRDNKPYG) has biased composition (basic and acidic residues). Over residues 1015–1027 (VAPKKAKPRRGRA) the composition is skewed to basic residues. The segment covering 1065–1074 (PGERVDRTSD) has biased composition (basic and acidic residues). The segment covering 1075–1085 (MEELEADDDSD) has biased composition (acidic residues). 2 stretches are compositionally biased toward polar residues: residues 1095 to 1114 (PTQT…SSSP) and 1146 to 1159 (AKNS…MTQE). Positions 1160–1170 (SSDGGDSMDSD) are enriched in low complexity. Over residues 1194-1209 (PSSSVFSSGQKATPNM) the composition is skewed to polar residues.

It belongs to the DEAD box helicase family. DEAH subfamily. FANCM sub-subfamily. As to quaternary structure, interacts with the MHF histone-fold complex to form the FANCM-MHF complex.

The protein resides in the nucleus. It catalyses the reaction ATP + H2O = ADP + phosphate + H(+). In terms of biological role, ATP-dependent DNA helicase involved in DNA damage repair by homologous recombination and in genome maintenance. Capable of unwinding D-loops. Plays a role in limiting crossover recombinants during mitotic DNA double-strand break (DSB) repair. Component of a FANCM-MHF complex which promotes gene conversion at blocked replication forks, probably by reversal of the stalled fork. The sequence is that of ATP-dependent DNA helicase mph1 from Sclerotinia sclerotiorum (strain ATCC 18683 / 1980 / Ss-1) (White mold).